A 267-amino-acid polypeptide reads, in one-letter code: Hydroxyethylthiazole kinase (267 aa).

Met-42 contributes to the substrate binding site. ATP-binding residues include Cys-118 and Thr-162. Gly-189 lines the substrate pocket.

The protein belongs to the Thz kinase family. It depends on Mg(2+) as a cofactor.

The catalysed reaction is 5-(2-hydroxyethyl)-4-methylthiazole + ATP = 4-methyl-5-(2-phosphooxyethyl)-thiazole + ADP + H(+). The protein operates within cofactor biosynthesis; thiamine diphosphate biosynthesis; 4-methyl-5-(2-phosphoethyl)-thiazole from 5-(2-hydroxyethyl)-4-methylthiazole: step 1/1. In terms of biological role, catalyzes the phosphorylation of the hydroxyl group of 4-methyl-5-beta-hydroxyethylthiazole (THZ). This is Hydroxyethylthiazole kinase from Rubrobacter xylanophilus (strain DSM 9941 / JCM 11954 / NBRC 16129 / PRD-1).